Here is a 370-residue protein sequence, read N- to C-terminus: tRNA (guanine(26)-N(2))-dimethyltransferase (370 aa).

A Trm1 methyltransferase domain is found at 4–368; it reads TWVTEGRTTI…APLEEIRDCI (365 aa). R41, R66, D82, D108, and A109 together coordinate S-adenosyl-L-methionine. C237, C240, C256, and C259 together coordinate Zn(2+).

Belongs to the class I-like SAM-binding methyltransferase superfamily. Trm1 family.

It catalyses the reaction guanosine(26) in tRNA + 2 S-adenosyl-L-methionine = N(2)-dimethylguanosine(26) in tRNA + 2 S-adenosyl-L-homocysteine + 2 H(+). In terms of biological role, dimethylates a single guanine residue at position 26 of a number of tRNAs using S-adenosyl-L-methionine as donor of the methyl groups. This chain is tRNA (guanine(26)-N(2))-dimethyltransferase, found in Methanospirillum hungatei JF-1 (strain ATCC 27890 / DSM 864 / NBRC 100397 / JF-1).